We begin with the raw amino-acid sequence, 258 residues long: Venom plasminogen activator Haly-PA (258 aa).

The first 18 residues, 1–18 (MALIRVLANLLILQLSYA), serve as a signal peptide directing secretion. The propeptide occupies 19-24 (QKSSEL). In terms of domain architecture, Peptidase S1 spans 25-249 (VVGGDECNIN…HLDWIKSIIA (225 aa)). 6 cysteine pairs are disulfide-bonded: Cys-31–Cys-163, Cys-50–Cys-66, Cys-98–Cys-256, Cys-142–Cys-210, Cys-174–Cys-189, and Cys-200–Cys-225. The N-linked (GlcNAc...) asparagine glycan is linked to Asn-44. Residues His-65 and Asp-110 each act as charge relay system in the active site. Ser-204 serves as the catalytic Charge relay system.

This sequence belongs to the peptidase S1 family. Snake venom subfamily. As to quaternary structure, monomer. In terms of processing, glycosylated. In terms of tissue distribution, expressed by the venom gland.

The protein resides in the secreted. Functionally, snake venom serine protease that activates plasminogen. Displays indirect fibrino(geno)lytic activity through conversion of plasminogen to plasmin. Shows a preferential cleavage at Arg-|-Xaa instead of Lys-|-Xaa bonds. This is Venom plasminogen activator Haly-PA from Gloydius brevicauda (Korean slamosa snake).